Consider the following 187-residue polypeptide: Peptide methionine sulfoxide reductase A2-1 (187 aa).

It belongs to the MsrA Met sulfoxide reductase family.

Its subcellular location is the cytoplasm. The protein resides in the cytosol. The enzyme catalyses L-methionyl-[protein] + [thioredoxin]-disulfide + H2O = L-methionyl-(S)-S-oxide-[protein] + [thioredoxin]-dithiol. The catalysed reaction is [thioredoxin]-disulfide + L-methionine + H2O = L-methionine (S)-S-oxide + [thioredoxin]-dithiol. Functionally, catalyzes the reduction of methionine sulfoxide (MetSO) to methionine in proteins. Plays a protective role against oxidative stress by restoring activity to proteins that have been inactivated by methionine oxidation. MSRA family specifically reduces the MetSO S-enantiomer. This Oryza sativa subsp. japonica (Rice) protein is Peptide methionine sulfoxide reductase A2-1 (MSRA2-1).